The primary structure comprises 277 residues: Methylglyoxal reductase DkgA (277 aa).

The active-site Proton donor is Y51. H107 contributes to the substrate binding site. Residue 187 to 241 (SPLAQGGKGVFDQEIIRKLAQQYNKTPAQIVIRWHLDSGLIVIPKSVTPARIREN) coordinates NADP(+).

It belongs to the aldo/keto reductase family. In terms of assembly, monomer.

It localises to the cytoplasm. It catalyses the reaction hydroxyacetone + NADP(+) = methylglyoxal + NADPH + H(+). Aldo-keto reductase that significantly contributes to cellular methylglyoxal detoxification by catalyzing the NADPH-dependent conversion of methylglyoxal to acetol. The chain is Methylglyoxal reductase DkgA from Yersinia pestis.